Reading from the N-terminus, the 101-residue chain is Protein PIP-1 (101 aa).

Positions 1–23 (MGKCLLLPLLLVVLSSLLGFPQA) are cleaved as a signal peptide. The region spanning 24–101 (LECFQCQRVS…CHDSPFCNKF (78 aa)) is the UPAR/Ly6 domain. 5 cysteine pairs are disulfide-bonded: C26–C53, C29–C38, C45–C71, C75–C91, and C92–C98. Residue N84 is glycosylated (N-linked (GlcNAc...) asparagine).

The protein localises to the secreted. This is Protein PIP-1 from Sus scrofa (Pig).